A 409-amino-acid polypeptide reads, in one-letter code: MLYYLFQYLDKYFDFPGAGVFQYITFRSALAIIMSLLISTIFGKRVISYLSRLQVGETVRELGLEGQTQKAGTPTMGGLIIIFSTLLPVLLLAKLNNIYIILLIVTTIWMGAIGFLDDYIKIFKKDKAGLKGIFKVIGQVGLGLIVGTTLYFHQDVTIRENISKNKIEVYSTQKGANTLSSDKKSTATTIPFFKNNEFDYAELLAWTGDGYRNYAWLIFIPIVIFIITAVSNGANLTDGIDGLAAGTSAISVIAIGVFTFVSGNVIFSNYLNIMFIPNSGEMTVFIAAFVGALIGFLWYNSYPAAVFMGDTGSLTIGGIIAVLAIAVRKEMLIPVFCGIFLAENLSVVLQVSYFKYTKKRFGEGRRIFLMSPLHHHYQKKGYHESKIVTRFWIVGILLAIVSIVTLKLR.

10 consecutive transmembrane segments (helical) span residues Tyr-23–Gly-43, Thr-73–Ala-93, Leu-95–Phe-115, Gly-132–Phe-152, Tyr-214–Ala-234, Thr-247–Phe-267, Ser-279–Tyr-299, Ala-305–Ile-325, Met-331–Val-351, and Lys-386–Leu-406.

The protein belongs to the glycosyltransferase 4 family. MraY subfamily. Requires Mg(2+) as cofactor.

It localises to the cell inner membrane. The enzyme catalyses UDP-N-acetyl-alpha-D-muramoyl-L-alanyl-gamma-D-glutamyl-meso-2,6-diaminopimeloyl-D-alanyl-D-alanine + di-trans,octa-cis-undecaprenyl phosphate = di-trans,octa-cis-undecaprenyl diphospho-N-acetyl-alpha-D-muramoyl-L-alanyl-D-glutamyl-meso-2,6-diaminopimeloyl-D-alanyl-D-alanine + UMP. The protein operates within cell wall biogenesis; peptidoglycan biosynthesis. Catalyzes the initial step of the lipid cycle reactions in the biosynthesis of the cell wall peptidoglycan: transfers peptidoglycan precursor phospho-MurNAc-pentapeptide from UDP-MurNAc-pentapeptide onto the lipid carrier undecaprenyl phosphate, yielding undecaprenyl-pyrophosphoryl-MurNAc-pentapeptide, known as lipid I. In Flavobacterium psychrophilum (strain ATCC 49511 / DSM 21280 / CIP 103535 / JIP02/86), this protein is Phospho-N-acetylmuramoyl-pentapeptide-transferase.